The sequence spans 39 residues: L-amino-acid oxidase (39 aa).

Belongs to the flavin monoamine oxidase family. FIG1 subfamily. As to quaternary structure, monomer. This is in contrast with most of its orthologs, that are non-covalently linked homodimers. It depends on FAD as a cofactor. In terms of processing, N-glycosylated. In terms of tissue distribution, expressed by the venom gland.

It localises to the secreted. It carries out the reaction an L-alpha-amino acid + O2 + H2O = a 2-oxocarboxylate + H2O2 + NH4(+). The catalysed reaction is L-leucine + O2 + H2O = 4-methyl-2-oxopentanoate + H2O2 + NH4(+). In terms of biological role, catalyzes an oxidative deamination of predominantly hydrophobic and aromatic L-amino acids, thus producing hydrogen peroxide that may contribute to the diverse toxic effects of this enzyme. Shows activity on L-Leu. Exhibits diverse biological activities, such as hemorrhage, hemolysis, edema, apoptosis of vascular endothelial cells or tumor cell lines, and antiparasitic activities, as well as regulation of platelet aggregation. Effects of snake L-amino oxidases on platelets are controversial, since they either induce aggregation or inhibit agonist-induced aggregation. These different effects are probably due to different experimental conditions. In addition, this protein inhibits dose-dependently the growth of Gram-positive, Gram-negative bacteria and yeast, probably by the generation of hydrogen peroxide. This chain is L-amino-acid oxidase, found in Bothrops marajoensis (Marajo lancehead).